Reading from the N-terminus, the 747-residue chain is ATP-dependent RNA helicase DBP7 (747 aa).

Disordered stretches follow at residues 1–102 (MDDD…TYVS) and 111–130 (SKLE…SNAP). A compositionally biased stretch (polar residues) spans 15-24 (SNASSKSSAQ). Basic and acidic residues-rich tracts occupy residues 75-96 (SFRE…EGGK) and 111-123 (SKLE…EEKT). A Q motif motif is present at residues 135–164 (DDFNGLGLNDNLVHHLTESLRFKNPTQIQK). The Helicase ATP-binding domain maps to 168–363 (PSLLSTSRDL…SIILNNPEQI (196 aa)). 181 to 188 (AQTGSGKT) is a binding site for ATP. A DEAD box motif is present at residues 295 to 298 (DEGD). A Helicase C-terminal domain is found at 401 to 626 (TLSAVLKEVA…SSEIKKSDPK (226 aa)). Residues 700 to 729 (KKLGSLATKSSSTRKEYGEKSRKLEDPRKK) form a disordered region. Positions 712 to 728 (TRKEYGEKSRKLEDPRK) are enriched in basic and acidic residues.

It belongs to the DEAD box helicase family. DDX31/DBP7 subfamily.

The protein resides in the nucleus. It is found in the nucleolus. It catalyses the reaction ATP + H2O = ADP + phosphate + H(+). Functionally, ATP-binding RNA helicase involved in the biogenesis of 60S ribosomal subunits and is required for the normal formation of 25S and 5.8S rRNAs. The protein is ATP-dependent RNA helicase DBP7 (DBP7) of Meyerozyma guilliermondii (strain ATCC 6260 / CBS 566 / DSM 6381 / JCM 1539 / NBRC 10279 / NRRL Y-324) (Yeast).